The chain runs to 405 residues: GTPase Obg (405 aa).

Positions 1-159 constitute an Obg domain; sequence MRFIDEAVVT…KVLKFELKVV (159 aa). Residues 160–333 enclose the OBG-type G domain; the sequence is ADVGLIGLPN…IKYHLMNEIE (174 aa). Residues 166-173, 191-195, 213-216, 283-286, and 314-316 contribute to the GTP site; these read GLPNAGKS, FTTLV, DIPG, NKID, and ATL. Mg(2+) is bound by residues Ser-173 and Thr-193. Basic and acidic residues predominate over residues 371–382; sequence YRAARKAAREGT. Residues 371-405 form a disordered region; that stretch reads YRAARKAAREGTDLSDDDFDDSDDDDDGVEVVYAP. Residues 383–399 show a composition bias toward acidic residues; it reads DLSDDDFDDSDDDDDGV.

Belongs to the TRAFAC class OBG-HflX-like GTPase superfamily. OBG GTPase family. In terms of assembly, monomer. It depends on Mg(2+) as a cofactor.

Its subcellular location is the cytoplasm. In terms of biological role, an essential GTPase which binds GTP, GDP and possibly (p)ppGpp with moderate affinity, with high nucleotide exchange rates and a fairly low GTP hydrolysis rate. Plays a role in control of the cell cycle, stress response, ribosome biogenesis and in those bacteria that undergo differentiation, in morphogenesis control. In Psychrobacter cryohalolentis (strain ATCC BAA-1226 / DSM 17306 / VKM B-2378 / K5), this protein is GTPase Obg.